The chain runs to 523 residues: NADH-ubiquinone oxidoreductase chain 4 (523 aa).

The next 14 helical transmembrane spans lie at 22–42, 62–82, 120–140, 149–169, 170–190, 204–224, 246–266, 276–296, 303–323, 338–358, 366–386, 404–424, 444–464, and 488–508; these read FFIM…AIAL, LLTF…SALF, ISLF…LVSW, EYCI…SVLD, LLLF…IIGV, FFLY…LIYF, ILWL…PVHI, PTAG…YGFL, FPYA…IAIV, IIAY…FSQN, ILLM…VGVL, TMPI…SLPG, FVAF…LWLC, and FFMF…PEPF.

It belongs to the complex I subunit 4 family.

The protein localises to the mitochondrion membrane. The catalysed reaction is a ubiquinone + NADH + 5 H(+)(in) = a ubiquinol + NAD(+) + 4 H(+)(out). Functionally, core subunit of the mitochondrial membrane respiratory chain NADH dehydrogenase (Complex I) that is believed to belong to the minimal assembly required for catalysis. Complex I functions in the transfer of electrons from NADH to the respiratory chain. The immediate electron acceptor for the enzyme is believed to be ubiquinone. The polypeptide is NADH-ubiquinone oxidoreductase chain 4 (ND4) (Prototheca wickerhamii).